Reading from the N-terminus, the 144-residue chain is Large ribosomal subunit protein uL11 (144 aa).

This sequence belongs to the universal ribosomal protein uL11 family. As to quaternary structure, part of the ribosomal stalk of the 50S ribosomal subunit. Interacts with L10 and the large rRNA to form the base of the stalk. L10 forms an elongated spine to which L12 dimers bind in a sequential fashion forming a multimeric L10(L12)X complex. Post-translationally, one or more lysine residues are methylated.

Functionally, forms part of the ribosomal stalk which helps the ribosome interact with GTP-bound translation factors. The protein is Large ribosomal subunit protein uL11 of Rhodococcus opacus (strain B4).